A 490-amino-acid chain; its full sequence is Betaine aldehyde dehydrogenase (490 aa).

K(+) is bound by residues I27 and D93. Residue 150–152 coordinates NAD(+); that stretch reads GAW. Catalysis depends on K162, which acts as the Charge relay system. 176-179 contributes to the NAD(+) binding site; that stretch reads KPSE. V180 serves as a coordination point for K(+). Residue 230-233 participates in NAD(+) binding; it reads GTTT. Residue L246 coordinates K(+). E252 (proton acceptor) is an active-site residue. Residues G254, C286, and E387 each contribute to the NAD(+) site. The active-site Nucleophile is C286. C286 carries the cysteine sulfenic acid (-SOH) modification. 2 residues coordinate K(+): K457 and G460. The active-site Charge relay system is E464.

This sequence belongs to the aldehyde dehydrogenase family. Dimer of dimers. It depends on K(+) as a cofactor.

It catalyses the reaction betaine aldehyde + NAD(+) + H2O = glycine betaine + NADH + 2 H(+). It participates in amine and polyamine biosynthesis; betaine biosynthesis via choline pathway; betaine from betaine aldehyde: step 1/1. Functionally, involved in the biosynthesis of the osmoprotectant glycine betaine. Catalyzes the irreversible oxidation of betaine aldehyde to the corresponding acid. In Pseudomonas putida (strain GB-1), this protein is Betaine aldehyde dehydrogenase.